The primary structure comprises 217 residues: Dephospho-CoA kinase (217 aa).

The region spanning 4–203 is the DPCK domain; sequence IVALTGGISS…SHLSRIYNKN (200 aa). 12 to 17 serves as a coordination point for ATP; sequence SSGKTT.

It belongs to the CoaE family.

It localises to the cytoplasm. The enzyme catalyses 3'-dephospho-CoA + ATP = ADP + CoA + H(+). Its pathway is cofactor biosynthesis; coenzyme A biosynthesis; CoA from (R)-pantothenate: step 5/5. Functionally, catalyzes the phosphorylation of the 3'-hydroxyl group of dephosphocoenzyme A to form coenzyme A. This Buchnera aphidicola subsp. Acyrthosiphon pisum (strain APS) (Acyrthosiphon pisum symbiotic bacterium) protein is Dephospho-CoA kinase.